We begin with the raw amino-acid sequence, 358 residues long: Isopentenyl-diphosphate delta-isomerase (358 aa).

Residue 12 to 13 (RK) participates in substrate binding. Residues 69–71 (AMT), Ser-99, and Asn-128 each bind FMN. Position 158 (Gln-158) interacts with substrate. Glu-159 is a Mg(2+) binding site. FMN is bound by residues Lys-190, Thr-220, 267–269 (GIR), and 288–289 (AG).

Belongs to the IPP isomerase type 2 family. As to quaternary structure, homooctamer. Dimer of tetramers. FMN serves as cofactor. The cofactor is NADPH. Mg(2+) is required as a cofactor.

Its subcellular location is the cytoplasm. The enzyme catalyses isopentenyl diphosphate = dimethylallyl diphosphate. Its function is as follows. Involved in the biosynthesis of isoprenoids. Catalyzes the 1,3-allylic rearrangement of the homoallylic substrate isopentenyl (IPP) to its allylic isomer, dimethylallyl diphosphate (DMAPP). This Listeria monocytogenes serovar 1/2a (strain ATCC BAA-679 / EGD-e) protein is Isopentenyl-diphosphate delta-isomerase.